We begin with the raw amino-acid sequence, 204 residues long: LexA repressor (204 aa).

The segment at residues 29-49 (RAEIADIMGFQSKNAASDHLR) is a DNA-binding region (H-T-H motif). Catalysis depends on for autocatalytic cleavage activity residues serine 123 and lysine 160.

It belongs to the peptidase S24 family. In terms of assembly, homodimer.

It catalyses the reaction Hydrolysis of Ala-|-Gly bond in repressor LexA.. In terms of biological role, represses a number of genes involved in the response to DNA damage (SOS response), including recA and lexA. In the presence of single-stranded DNA, RecA interacts with LexA causing an autocatalytic cleavage which disrupts the DNA-binding part of LexA, leading to derepression of the SOS regulon and eventually DNA repair. The protein is LexA repressor of Alcanivorax borkumensis (strain ATCC 700651 / DSM 11573 / NCIMB 13689 / SK2).